Here is a 1046-residue protein sequence, read N- to C-terminus: Translation initiation factor IF-2 (1046 aa).

Residues 49–448 (EAFPAEGSAP…MGAMVPRGNG (400 aa)) form a disordered region. The span at 52–71 (PAEGSAPSSRPGGRPGNGAR) shows a compositional bias: low complexity. Over residues 94–111 (RPGPGGRPVPGRPGPAPL) the composition is skewed to pro residues. 2 stretches are compositionally biased toward low complexity: residues 112-139 (PGAS…SQPV) and 147-159 (PRPA…AAAP). The span at 160-176 (APAPSAPAPAPSAPAPA) shows a compositional bias: pro residues. Residues 177–187 (PITSAPTAATP) are compositionally biased toward low complexity. The span at 188–206 (PAAPQRPTPGGPRPGPAAP) shows a compositional bias: pro residues. The span at 210 to 222 (RTGGPGGPGGPGG) shows a compositional bias: gly residues. Over residues 223–235 (GPRPGPRPGPRPA) the composition is skewed to pro residues. Residues 244-253 (SPAAGPRAAS) show a composition bias toward low complexity. Pro residues-rich tracts occupy residues 260–281 (SAPP…PRPG) and 304–314 (RPTPGQMPPRP). A compositionally biased stretch (low complexity) spans 320 to 333 (PRPNSNMFQPRPAG). Residues 334–414 (GAPGRPGGGG…AGAFGPGGRG (81 aa)) show a composition bias toward gly residues. A compositionally biased stretch (basic residues) spans 415–426 (RPGRQRKSKRAK). The tr-type G domain maps to 539–711 (ARPPVVTVMG…VILTADASLD (173 aa)). The tract at residues 548 to 555 (GHVDHGKT) is G1. 548 to 555 (GHVDHGKT) is a GTP binding site. Positions 573-577 (GITQH) are G2. A G3 region spans residues 598–601 (DTPG). GTP-binding positions include 598-602 (DTPGH) and 652-655 (NKVD). Residues 652-655 (NKVD) form a G4 region. A G5 region spans residues 688–690 (SAR).

The protein belongs to the TRAFAC class translation factor GTPase superfamily. Classic translation factor GTPase family. IF-2 subfamily.

The protein resides in the cytoplasm. One of the essential components for the initiation of protein synthesis. Protects formylmethionyl-tRNA from spontaneous hydrolysis and promotes its binding to the 30S ribosomal subunits. Also involved in the hydrolysis of GTP during the formation of the 70S ribosomal complex. This chain is Translation initiation factor IF-2, found in Parafrankia sp. (strain EAN1pec).